The primary structure comprises 74 residues: Guanine nucleotide-binding protein G(T) subunit gamma-T1 (74 aa).

At cysteine 71 the chain carries Cysteine methyl ester. Residue cysteine 71 is the site of S-farnesyl cysteine attachment. The propeptide at 72 to 74 (VIS) is removed in mature form.

The protein belongs to the G protein gamma family. As to quaternary structure, g proteins are composed of 3 units, alpha, beta and gamma. As to expression, retinal rod outer segment.

It is found in the cell membrane. Functionally, guanine nucleotide-binding proteins (G proteins) are involved as a modulator or transducer in various transmembrane signaling systems. The beta and gamma chains are required for the GTPase activity, for replacement of GDP by GTP, and for G protein-effector interaction. The protein is Guanine nucleotide-binding protein G(T) subunit gamma-T1 (GNGT1) of Canis lupus familiaris (Dog).